An 83-amino-acid polypeptide reads, in one-letter code: uncharacterized protein (83 aa).

Helical transmembrane passes span 5-22, 32-49, and 56-78; these read VLLS…VYSI, IIKI…FSPA, and IGTI…IFIA.

The protein resides in the cell membrane. This is an uncharacterized protein from Rickettsia prowazekii (strain Madrid E).